Consider the following 503-residue polypeptide: Maturase K (503 aa).

The protein belongs to the intron maturase 2 family. MatK subfamily.

Its subcellular location is the plastid. It is found in the chloroplast. Functionally, usually encoded in the trnK tRNA gene intron. Probably assists in splicing its own and other chloroplast group II introns. This Rosa rugosa (Rugosa rose) protein is Maturase K.